Reading from the N-terminus, the 547-residue chain is G protein-coupled receptor associated sorting protein 3 (547 aa).

2 stretches are compositionally biased toward basic residues: residues 1 to 10 (MTGTKNKTRA) and 38 to 48 (AKTRAKAKAKT). Residues 1-53 (MTGTKNKTRAQAKTEKKPVTQAKAGAEREATGVVRPVAKTRAKAKAKTGSKTD) form a disordered region.

It belongs to the GPRASP family. As to quaternary structure, homodimer.

The protein localises to the cytoplasm. The protein resides in the nucleus. In terms of biological role, survival and differentiation promoting protein that plays a role in the regulation of neurosynaptogenesis. Induces phosphatase PP2A activity which results in APP dephosphorylation and inhibits BACE1-mediated processing of APP. This chain is G protein-coupled receptor associated sorting protein 3 (GPRASP3), found in Macaca fascicularis (Crab-eating macaque).